A 1342-amino-acid polypeptide reads, in one-letter code: Zinc finger protein 335 (1342 aa).

2 disordered regions span residues 1-102 and 201-228; these read MEEN…VTGG and TSTSTCLEAQGGPSSPVQLPPASGAEEP. Low complexity predominate over residues 34 to 49; that stretch reads AVSADSSDAAAAPGQA. Residues 201 to 217 are compositionally biased toward polar residues; that stretch reads TSTSTCLEAQGGPSSPV. The C2H2-type 1 zinc-finger motif lies at 245-268; sequence FKCKMCQYRSSTKATLLRHMRERH. Residues 274–442 form a disordered region; that stretch reads AAAAAAGKKG…TLPRRRGRPS (169 aa). Residues 297–327 are compositionally biased toward acidic residues; sequence EEGPEEEDDDDIVDAGAIDDLEEDSDYNPAE. A compositionally biased stretch (basic residues) spans 346-357; it reads RPRRRPGRPRKL. 8 C2H2-type zinc fingers span residues 465–487, 495–517, 523–545, 562–584, 590–612, 621–643, 649–672, and 678–701; these read FLCRICGSRFLSHEDLRFHVNSH, FKCLQCSYRSRRWSSLKEHMFNH, YKCDECSYTSVYRKDVIRHAAVH, FPCPVCGRVYPMQKRLTQHMKTH, HMCDKCGKSFKKRYTFKMHLLTH, FKCEFCEFVCEDKKALLNHQLSH, FKCSFCPYRTFREDFLLSHVAVKH, and FACEYCHFSTRHKKNLRLHVRCRH. Disordered regions lie at residues 732–763 and 964–1013; these read LKQQHSAAPGPPPSSPGPPEIPPEATTFQSSE and CGGL…SAAT. Pro residues predominate over residues 740 to 753; sequence PGPPPSSPGPPEIP. Phosphoserine occurs at positions 976, 992, and 1007. The span at 986 to 997 shows a compositional bias: low complexity; sequence SQSSASSPPATS. C2H2-type zinc fingers lie at residues 1019–1041, 1047–1069, 1075–1097, and 1103–1126; these read FSCKICAEAFPGRAEMESHKRAH, FKCPDCPFSARQWPEVRAHMAQH, HQCSQCSFASKNKKDLRRHMLTH, and FACHLCGQRFNRNGHLKFHIQRLH. Residue lysine 1022 forms a Glycyl lysine isopeptide (Lys-Gly) (interchain with G-Cter in SUMO2) linkage. The interval 1041 to 1342 is involved in the interaction with CCAR2; the sequence is HAGPGAFKCP…EYDVITLADD (302 aa). Serine 1153 bears the Phosphoserine mark.

The protein belongs to the krueppel C2H2-type zinc-finger protein family. Interacts with NCOA6; may enhance ligand-dependent transcriptional activation by nuclear hormone receptors. Interacts with CNOT6. Interacts with CNOT9; the interaction is direct. Component of a nuclear receptor-mediated transcription complex composed of at least ZNF335, CCAR2 and EMSY; the complex stimulates the transcription of nuclear receptor target genes such as SOX9 and HOXA1. Within the complex interacts with EMSY and interacts (via C-terminus) with CCAR2. Interacts with members of histone H3'Lys4'(H3K4) methyltransferase complexes ASH2L, CXXC1, KMT2A/MLL1, RBBP5, SETD1A and WDR5. Component of a histone methylation complex composed of at least ZNF335, RBBP5, ASH2L and WDR5; the complex may have histone H3-specific methyltransferase activity, however does not have specificity for 'Lys-4' of histone H3. Interacts with RBBP5 and WDR5. Interacts with ASHL2. Components of this complex may associate with components of the ZNF335-CCAR2-EMSY nuclear receptor-mediated transcription complex to form a complex at least composed of ZNF335, HCFC1, CCAR2, EMSY, MKI67, RBBP5, ASH2L and WDR5. Within this complex also interacts with HCFC1 and MKI67. As to expression, ubiquitously expressed.

The protein resides in the nucleus. Functionally, component or associated component of some histone methyltransferase complexes may regulate transcription through recruitment of those complexes on gene promoters. Enhances ligand-dependent transcriptional activation by nuclear hormone receptors. Plays an important role in neural progenitor cell proliferation and self-renewal through the regulation of specific genes involved brain development, including REST. Also controls the expression of genes involved in somatic development and regulates, for instance, lymphoblast proliferation. The sequence is that of Zinc finger protein 335 (ZNF335) from Homo sapiens (Human).